The primary structure comprises 219 residues: MSFNSNASKYQAENTVDKLFSNILHTSTTSKSVSKSKSKSKSKPKPISSTQLLVNQLQSTNTTANNNNTKRKKHNNNKRINKTLLEEKKFSKFIKYNHIKQKSNKSELDEKYLNKLVRKNINSLNKINKIDDLLIDEELNQIKQELLEENEFVGMGGGQLKGGKRLRKKLLNNTKQVIDEFDGFGEISSSNNNNKKKNSSYPGLTPGLAPVDYEEEDNE.

Disordered regions lie at residues 27-79 and 186-219; these read STTS…NNKR and EISS…EDNE. Composition is skewed to basic residues over residues 34-44 and 69-79; these read SKSKSKSKSKP and TKRKKHNNNKR.

The protein belongs to the RRT14 family.

It localises to the nucleus. Its subcellular location is the nucleolus. In terms of biological role, involved in ribosome biogenesis, probably through modulation of rDNA transcription. This Candida albicans (strain SC5314 / ATCC MYA-2876) (Yeast) protein is Regulator of rDNA transcription 14 (RRT14).